The following is a 387-amino-acid chain: Succinyl-diaminopimelate desuccinylase (387 aa).

A Zn(2+)-binding site is contributed by His-74. The active site involves Asp-76. Asp-107 lines the Zn(2+) pocket. Residue Glu-142 is the Proton acceptor of the active site. 3 residues coordinate Zn(2+): Glu-143, Glu-171, and His-360.

This sequence belongs to the peptidase M20A family. DapE subfamily. As to quaternary structure, homodimer. Zn(2+) is required as a cofactor. It depends on Co(2+) as a cofactor.

It carries out the reaction N-succinyl-(2S,6S)-2,6-diaminopimelate + H2O = (2S,6S)-2,6-diaminopimelate + succinate. It functions in the pathway amino-acid biosynthesis; L-lysine biosynthesis via DAP pathway; LL-2,6-diaminopimelate from (S)-tetrahydrodipicolinate (succinylase route): step 3/3. Functionally, catalyzes the hydrolysis of N-succinyl-L,L-diaminopimelic acid (SDAP), forming succinate and LL-2,6-diaminopimelate (DAP), an intermediate involved in the bacterial biosynthesis of lysine and meso-diaminopimelic acid, an essential component of bacterial cell walls. This chain is Succinyl-diaminopimelate desuccinylase, found in Rhodopseudomonas palustris (strain BisA53).